The sequence spans 107 residues: UPF0145 protein BT_3410 (107 aa).

This sequence belongs to the UPF0145 family.

This chain is UPF0145 protein BT_3410, found in Bacteroides thetaiotaomicron (strain ATCC 29148 / DSM 2079 / JCM 5827 / CCUG 10774 / NCTC 10582 / VPI-5482 / E50).